A 318-amino-acid chain; its full sequence is Rhomboid-related protein 4 (318 aa).

Residues 1 to 21 lie on the Cytoplasmic side of the membrane; sequence MQRRSRGINTGLILLLSQIFH. Residues 22–42 form a helical membrane-spanning segment; it reads VGINNIPPVTLATLALNIWFF. At 43-106 the chain is on the extracellular side; it reads LNPQKPLYSS…RRLGSRWFAY (64 aa). Residues 107-127 traverse the membrane as a helical segment; sequence VITTFSVLTGVVYLLLQFAVA. Residues 128-137 are Cytoplasmic-facing; it reads EFMDEPDFKR. Residues 138–154 traverse the membrane as a helical segment; that stretch reads SCAVGFSGVLFALKVLN. The Nucleophile role is filled by Ser144. Residues 155–179 are Extracellular-facing; that stretch reads NHYCPGGFVNILGFPVPNRFACWVE. The chain crosses the membrane as a helical span at residues 180–204; the sequence is LVAIHLFSPGTSFAGHQAGILVGLM. Residue His195 is part of the active site. Topologically, residues 205-318 are cytoplasmic; sequence YTQGPLKKIM…RQRLHRFDSQ (114 aa). The segment at 271–286 is ubiquitin-binding domain (UBD); sequence SEEEQLERALQASLWD. A disordered region spans residues 285–318; sequence WDRGHTRNSPPPYGFHLSPEEEMRRQRLHRFDSQ. Residues 302 to 318 show a composition bias toward basic and acidic residues; sequence SPEEEMRRQRLHRFDSQ. The segment at 303–318 is VCP/p97-interacting motif (VIM); it reads PEEEMRRQRLHRFDSQ.

Belongs to the peptidase S54 family. In terms of assembly, interacts with BIK and STEAP3. Interacts (via C-terminal domain) with VCP. Interacts with ubiquitin and ubiquitinated proteins.

The protein resides in the endoplasmic reticulum membrane. Its subcellular location is the mitochondrion membrane. It catalyses the reaction Cleaves type-1 transmembrane domains using a catalytic dyad composed of serine and histidine that are contributed by different transmembrane domains.. Its activity is regulated as follows. Inhibited by aprotinin. Its function is as follows. Intramembrane-cleaving serine protease that cleaves single transmembrane or multi-pass membrane proteins in the hydrophobic plane of the membrane, luminal loops and juxtamembrane regions. Involved in regulated intramembrane proteolysis and the subsequent release of functional polypeptides from their membrane anchors. Functional component of endoplasmic reticulum-associated degradation (ERAD) for misfolded membrane proteins. Required for the degradation process of some specific misfolded endoplasmic reticulum (ER) luminal proteins. Participates in the transfer of misfolded proteins from the ER to the cytosol, where they are destroyed by the proteasome in a ubiquitin-dependent manner. Functions in BIK, MPZ, PKD1, PTCRA, RHO, STEAP3 and TRAC processing. Involved in the regulation of exosomal secretion; inhibits the TSAP6-mediated secretion pathway. Involved in the regulation of apoptosis; modulates BIK-mediated apoptotic activity. Also plays a role in the regulation of spermatogenesis; inhibits apoptotic activity in spermatogonia. The chain is Rhomboid-related protein 4 (RHBDD1) from Pongo abelii (Sumatran orangutan).